The primary structure comprises 195 residues: Imidazoleglycerol-phosphate dehydratase (195 aa).

It belongs to the imidazoleglycerol-phosphate dehydratase family.

It is found in the cytoplasm. It catalyses the reaction D-erythro-1-(imidazol-4-yl)glycerol 3-phosphate = 3-(imidazol-4-yl)-2-oxopropyl phosphate + H2O. The protein operates within amino-acid biosynthesis; L-histidine biosynthesis; L-histidine from 5-phospho-alpha-D-ribose 1-diphosphate: step 6/9. The sequence is that of Imidazoleglycerol-phosphate dehydratase from Azoarcus sp. (strain BH72).